The primary structure comprises 55 residues: ATP synthase F(0) complex subunit 8 (55 aa).

The helical transmembrane segment at 4 to 24 (LLPTPWFTIFIYAWMVLLAVI) threads the bilayer.

Belongs to the ATPase protein 8 family. Component of the ATP synthase complex composed at least of ATP5F1A/subunit alpha, ATP5F1B/subunit beta, ATP5MC1/subunit c (homooctomer), MT-ATP6/subunit a, MT-ATP8/subunit 8, ATP5ME/subunit e, ATP5MF/subunit f, ATP5MG/subunit g, ATP5MK/subunit k, ATP5MJ/subunit j, ATP5F1C/subunit gamma, ATP5F1D/subunit delta, ATP5F1E/subunit epsilon, ATP5PF/subunit F6, ATP5PB/subunit b, ATP5PD/subunit d, ATP5PO/subunit OSCP. ATP synthase complex consists of a soluble F(1) head domain (subunits alpha(3) and beta(3)) - the catalytic core - and a membrane F(0) domain - the membrane proton channel (subunits c, a, 8, e, f, g, k and j). These two domains are linked by a central stalk (subunits gamma, delta, and epsilon) rotating inside the F1 region and a stationary peripheral stalk (subunits F6, b, d, and OSCP).

It is found in the mitochondrion membrane. Functionally, subunit 8, of the mitochondrial membrane ATP synthase complex (F(1)F(0) ATP synthase or Complex V) that produces ATP from ADP in the presence of a proton gradient across the membrane which is generated by electron transport complexes of the respiratory chain. ATP synthase complex consist of a soluble F(1) head domain - the catalytic core - and a membrane F(1) domain - the membrane proton channel. These two domains are linked by a central stalk rotating inside the F(1) region and a stationary peripheral stalk. During catalysis, ATP synthesis in the catalytic domain of F(1) is coupled via a rotary mechanism of the central stalk subunits to proton translocation. In vivo, can only synthesize ATP although its ATP hydrolase activity can be activated artificially in vitro. Part of the complex F(0) domain. The chain is ATP synthase F(0) complex subunit 8 from Dicentrarchus labrax (European seabass).